The sequence spans 355 residues: Nuclear speckle splicing regulatory protein 1 homolog (355 aa).

Residues 1–57 (MSGTGFRYGLNVMKKKKPNESSNRITFTEDDSSSSEQEHAPIPNSFSSQITAASDAS) form a disordered region. Residues 44-54 (NSFSSQITAAS) show a composition bias toward polar residues. A coiled-coil region spans residues 99–162 (MENLIESAKK…EDRKEEDEKS (64 aa)). 2 disordered regions span residues 253-292 (SANNSMRDDKKRNHKSSYKRSLSPSTRYHQDRPDKRHGTY) and 325-355 (KIHASRNTTETQVQSARERYLQRKKKAATNP). Positions 280–289 (YHQDRPDKRH) are enriched in basic and acidic residues. Positions 293–326 (SLEEIDKQRKEFENRQRLQKEKEFQKSREAALKI) form a coiled coil. Residues 329–339 (SRNTTETQVQS) are compositionally biased toward polar residues. Basic residues predominate over residues 346 to 355 (QRKKKAATNP).

Belongs to the NSRP1 family.

The polypeptide is Nuclear speckle splicing regulatory protein 1 homolog (Schizosaccharomyces pombe (strain 972 / ATCC 24843) (Fission yeast)).